Consider the following 438-residue polypeptide: Xylose isomerase (438 aa).

Residues D306 and D308 each contribute to the Mg(2+) site.

It belongs to the xylose isomerase family. Homotetramer. Mg(2+) is required as a cofactor.

Its subcellular location is the cytoplasm. The enzyme catalyses alpha-D-xylose = alpha-D-xylulofuranose. In Pseudomonas fluorescens (strain SBW25), this protein is Xylose isomerase.